Reading from the N-terminus, the 580-residue chain is Putative ankyrin repeat protein L63 (580 aa).

14 ANK repeats span residues serine 81–isoleucine 110, aspartate 111–alanine 140, asparagine 141–alanine 170, asparagine 172–alanine 200, aspartate 202–lysine 230, serine 314–alanine 339, serine 340–cysteine 369, glycine 370–serine 399, glycine 400–alanine 429, asparagine 431–alanine 459, aspartate 461–alanine 489, glycine 490–alanine 519, aspartate 521–alanine 549, and asparagine 551–proline 579.

The sequence is that of Putative ankyrin repeat protein L63 from Acanthamoeba polyphaga (Amoeba).